Consider the following 140-residue polypeptide: Coiled-coil domain-containing protein 126 (140 aa).

The signal sequence occupies residues 1–35 (MFRTISRKNMSQKLSFLLLVFGLIWGLMLLHYTLQ). N110 carries an N-linked (GlcNAc...) asparagine glycan. Positions 118 to 130 (NGTNGNLVPVTTN) are enriched in low complexity. The disordered stretch occupies residues 118–140 (NGTNGNLVPVTTNKRTSVSGSVR). The span at 131–140 (KRTSVSGSVR) shows a compositional bias: polar residues.

It localises to the secreted. The polypeptide is Coiled-coil domain-containing protein 126 (Ccdc126) (Mus musculus (Mouse)).